We begin with the raw amino-acid sequence, 351 residues long: Holliday junction branch migration complex subunit RuvB (351 aa).

Residues 4–199 (DNPQFNQWYE…FGIINSLQYY (196 aa)) are large ATPase domain (RuvB-L). Residues Leu38, Arg39, Gly80, Lys83, Thr84, Thr85, 146 to 148 (EDY), Arg189, Tyr199, and Arg236 each bind ATP. Thr84 is a Mg(2+) binding site. A small ATPAse domain (RuvB-S) region spans residues 200 to 270 (TPEELQQIVV…IVTIGLDKLR (71 aa)). The head domain (RuvB-H) stretch occupies residues 273-351 (NRGLDETDHK…HLGHAYQRKL (79 aa)). DNA-binding residues include Arg328 and Arg333.

Belongs to the RuvB family. Homohexamer. Forms an RuvA(8)-RuvB(12)-Holliday junction (HJ) complex. HJ DNA is sandwiched between 2 RuvA tetramers; dsDNA enters through RuvA and exits via RuvB. An RuvB hexamer assembles on each DNA strand where it exits the tetramer. Each RuvB hexamer is contacted by two RuvA subunits (via domain III) on 2 adjacent RuvB subunits; this complex drives branch migration. In the full resolvosome a probable DNA-RuvA(4)-RuvB(12)-RuvC(2) complex forms which resolves the HJ.

The protein resides in the cytoplasm. It carries out the reaction ATP + H2O = ADP + phosphate + H(+). In terms of biological role, the RuvA-RuvB-RuvC complex processes Holliday junction (HJ) DNA during genetic recombination and DNA repair, while the RuvA-RuvB complex plays an important role in the rescue of blocked DNA replication forks via replication fork reversal (RFR). RuvA specifically binds to HJ cruciform DNA, conferring on it an open structure. The RuvB hexamer acts as an ATP-dependent pump, pulling dsDNA into and through the RuvAB complex. RuvB forms 2 homohexamers on either side of HJ DNA bound by 1 or 2 RuvA tetramers; 4 subunits per hexamer contact DNA at a time. Coordinated motions by a converter formed by DNA-disengaged RuvB subunits stimulates ATP hydrolysis and nucleotide exchange. Immobilization of the converter enables RuvB to convert the ATP-contained energy into a lever motion, pulling 2 nucleotides of DNA out of the RuvA tetramer per ATP hydrolyzed, thus driving DNA branch migration. The RuvB motors rotate together with the DNA substrate, which together with the progressing nucleotide cycle form the mechanistic basis for DNA recombination by continuous HJ branch migration. Branch migration allows RuvC to scan DNA until it finds its consensus sequence, where it cleaves and resolves cruciform DNA. The polypeptide is Holliday junction branch migration complex subunit RuvB (Leuconostoc mesenteroides subsp. mesenteroides (strain ATCC 8293 / DSM 20343 / BCRC 11652 / CCM 1803 / JCM 6124 / NCDO 523 / NBRC 100496 / NCIMB 8023 / NCTC 12954 / NRRL B-1118 / 37Y)).